Here is a 23-residue protein sequence, read N- to C-terminus: Dermaseptin-4 (23 aa).

Glutamine 23 carries the post-translational modification Glutamine amide.

As to expression, expressed by the skin glands.

The protein resides in the secreted. In terms of biological role, antimicrobial peptide, active against the Gram-positive bacterium S.aureus, and the Gram-negative bacteria E.coli and P.aeruginosa. Has hemolytic activity (5% hemolysis at 128 ug/ml). The protein is Dermaseptin-4 of Phyllomedusa tarsius (Brownbelly leaf frog).